The sequence spans 205 residues: Proteasome subunit beta (205 aa).

Positions 1–9 (MNQTENMEG) are cleaved as a propeptide — removed in mature form; by autocatalysis. Thr-10 serves as the catalytic Nucleophile.

The protein belongs to the peptidase T1B family. In terms of assembly, the 20S proteasome core is composed of 14 alpha and 14 beta subunits that assemble into four stacked heptameric rings, resulting in a barrel-shaped structure. The two inner rings, each composed of seven catalytic beta subunits, are sandwiched by two outer rings, each composed of seven alpha subunits. The catalytic chamber with the active sites is on the inside of the barrel. Has a gated structure, the ends of the cylinder being occluded by the N-termini of the alpha-subunits. Is capped at one or both ends by the proteasome regulatory ATPase, PAN.

It localises to the cytoplasm. The catalysed reaction is Cleavage of peptide bonds with very broad specificity.. Its activity is regulated as follows. The formation of the proteasomal ATPase PAN-20S proteasome complex, via the docking of the C-termini of PAN into the intersubunit pockets in the alpha-rings, triggers opening of the gate for substrate entry. Interconversion between the open-gate and close-gate conformations leads to a dynamic regulation of the 20S proteasome proteolysis activity. Functionally, component of the proteasome core, a large protease complex with broad specificity involved in protein degradation. This Methanosphaera stadtmanae (strain ATCC 43021 / DSM 3091 / JCM 11832 / MCB-3) protein is Proteasome subunit beta.